Consider the following 70-residue polypeptide: DNA gyrase inhibitor YacG (70 aa).

4 residues coordinate Zn(2+): C9, C12, C28, and C32. Residues 43-70 (ESRKIPGSSIDPESIVTSNNKQDNEDEQ) form a disordered region.

The protein belongs to the DNA gyrase inhibitor YacG family. As to quaternary structure, interacts with GyrB. Zn(2+) is required as a cofactor.

In terms of biological role, inhibits all the catalytic activities of DNA gyrase by preventing its interaction with DNA. Acts by binding directly to the C-terminal domain of GyrB, which probably disrupts DNA binding by the gyrase. This Legionella pneumophila (strain Paris) protein is DNA gyrase inhibitor YacG.